Here is a 351-residue protein sequence, read N- to C-terminus: Dihydroorotate dehydrogenase (quinone) (351 aa).

FMN contacts are provided by residues 67 to 71 (AGFDK) and T91. K71 lines the substrate pocket. 116 to 120 (NAMGF) contacts substrate. 2 residues coordinate FMN: N145 and N178. Residue N178 participates in substrate binding. The active-site Nucleophile is S181. N183 is a binding site for substrate. FMN is bound by residues K214 and T242. 243-244 (NT) contacts substrate. FMN contacts are provided by residues G262, G291, and 312-313 (YS).

It belongs to the dihydroorotate dehydrogenase family. Type 2 subfamily. In terms of assembly, monomer. It depends on FMN as a cofactor.

It is found in the cell membrane. It carries out the reaction (S)-dihydroorotate + a quinone = orotate + a quinol. The protein operates within pyrimidine metabolism; UMP biosynthesis via de novo pathway; orotate from (S)-dihydroorotate (quinone route): step 1/1. Functionally, catalyzes the conversion of dihydroorotate to orotate with quinone as electron acceptor. This chain is Dihydroorotate dehydrogenase (quinone), found in Helicobacter pylori (strain Shi470).